The sequence spans 448 residues: Deoxyguanosinetriphosphate triphosphohydrolase-like protein (448 aa).

Residues 1 to 26 (MQINSSWQERFLADPPREKDHRPPFR) form a disordered region. Residues 11 to 26 (FLADPPREKDHRPPFR) show a composition bias toward basic and acidic residues. The HD domain maps to 59–272 (RLTHSLEVAQ…MELADDIAYA (214 aa)).

It belongs to the dGTPase family. Type 2 subfamily.

This is Deoxyguanosinetriphosphate triphosphohydrolase-like protein from Histophilus somni (strain 129Pt) (Haemophilus somnus).